We begin with the raw amino-acid sequence, 462 residues long: Glycine--tRNA ligase (462 aa).

Substrate is bound by residues arginine 99 and glutamate 174. ATP-binding positions include 206–208 (RNE), 216–221 (FRTREF), 290–291 (EL), and 334–337 (GADR). 221–225 (FEQME) lines the substrate pocket. 330–334 (EPSLG) lines the substrate pocket.

The protein belongs to the class-II aminoacyl-tRNA synthetase family. Homodimer.

It localises to the cytoplasm. The enzyme catalyses tRNA(Gly) + glycine + ATP = glycyl-tRNA(Gly) + AMP + diphosphate. Its function is as follows. Catalyzes the attachment of glycine to tRNA(Gly). The sequence is that of Glycine--tRNA ligase from Macrococcus caseolyticus (strain JCSC5402) (Macrococcoides caseolyticum).